We begin with the raw amino-acid sequence, 251 residues long: Sugar fermentation stimulation protein homolog (251 aa).

This sequence belongs to the SfsA family.

The chain is Sugar fermentation stimulation protein homolog from Yersinia pseudotuberculosis serotype O:1b (strain IP 31758).